Reading from the N-terminus, the 394-residue chain is Short-chain dehydrogenase/reductase family 42E member 1 (394 aa).

Tyr153 acts as the Proton acceptor in catalysis. Lys157 is an NAD(+) binding site. A run of 2 helical transmembrane segments spans residues 283–303 (LPLTLIYCLAFLVEMTHFIVG) and 367–387 (FMLWDGILILLLALSVLTWIL).

It belongs to the 3-beta-HSD family.

It is found in the membrane. The polypeptide is Short-chain dehydrogenase/reductase family 42E member 1 (Sdr42e1) (Mus musculus (Mouse)).